Here is a 92-residue protein sequence, read N- to C-terminus: Long neurotoxin 2 (92 aa).

The N-terminal stretch at 1–21 (MKTLLLTLVVVTIVCLDLGYT) is a signal peptide. 5 disulfide bridges follow: Cys24/Cys42, Cys35/Cys63, Cys48/Cys52, Cys67/Cys79, and Cys80/Cys85.

It belongs to the three-finger toxin family. Long-chain subfamily. Type II alpha-neurotoxin sub-subfamily. As to expression, expressed by the venom gland.

It localises to the secreted. Binds with high affinity to muscular (alpha-1/CHRNA1) and neuronal (alpha-7/CHRNA7) nicotinic acetylcholine receptor (nAChR) and inhibits acetylcholine from binding to the receptor, thereby impairing neuromuscular and neuronal transmission. The polypeptide is Long neurotoxin 2 (Oxyuranus microlepidotus (Inland taipan)).